Consider the following 220-residue polypeptide: MAYRDQPLGELALSIPRASALFRKYDMDYCCGGKQTLARAAARKELDVDVIEAELAKLAEQPIEKDWRSAPLAEIIDHIIVRYHDRHREQLPELILQATKVERVHADKPSVPKGLTKYLTMLHEELSSHMMKEEQILFPMIKQGMGSQAMGPISVMESEHDEAGELLEVIKHTTNNVTPPPEACTTWKAMYNGINELIDDLMEHISLENNVLFPRALAGE.

The protein belongs to the RIC family. YtfE subfamily. As to quaternary structure, homodimer.

The protein localises to the cytoplasm. Di-iron-containing protein involved in the repair of iron-sulfur clusters damaged by oxidative and nitrosative stress conditions. The protein is Iron-sulfur cluster repair protein YtfE of Escherichia coli (strain SMS-3-5 / SECEC).